The primary structure comprises 339 residues: Anthranilate phosphoribosyltransferase (339 aa).

5-phospho-alpha-D-ribose 1-diphosphate contacts are provided by residues G82, 85–86, 92–95, 110–118, and S122; these read GD, NIST, and KHGNSSISS. Anthranilate is bound at residue G82. S94 lines the Mg(2+) pocket. N113 is an anthranilate binding site. Anthranilate is bound at residue R168. 2 residues coordinate Mg(2+): D227 and E228.

Belongs to the anthranilate phosphoribosyltransferase family. Homodimer. Requires Mg(2+) as cofactor.

The catalysed reaction is N-(5-phospho-beta-D-ribosyl)anthranilate + diphosphate = 5-phospho-alpha-D-ribose 1-diphosphate + anthranilate. It participates in amino-acid biosynthesis; L-tryptophan biosynthesis; L-tryptophan from chorismate: step 2/5. Functionally, catalyzes the transfer of the phosphoribosyl group of 5-phosphorylribose-1-pyrophosphate (PRPP) to anthranilate to yield N-(5'-phosphoribosyl)-anthranilate (PRA). This Ruthia magnifica subsp. Calyptogena magnifica protein is Anthranilate phosphoribosyltransferase.